Consider the following 238-residue polypeptide: dITP/XTP pyrophosphatase (238 aa).

7-12 (SANQHK) provides a ligand contact to substrate. Residue aspartate 89 is the Proton acceptor of the active site. Aspartate 89 provides a ligand contact to Mg(2+). Substrate is bound by residues serine 90, 191-194 (FGYD), lysine 217, and 222-223 (HR).

Belongs to the HAM1 NTPase family. As to quaternary structure, homodimer. Mg(2+) is required as a cofactor.

The enzyme catalyses XTP + H2O = XMP + diphosphate + H(+). It catalyses the reaction dITP + H2O = dIMP + diphosphate + H(+). The catalysed reaction is ITP + H2O = IMP + diphosphate + H(+). Its function is as follows. Pyrophosphatase that catalyzes the hydrolysis of nucleoside triphosphates to their monophosphate derivatives, with a high preference for the non-canonical purine nucleotides XTP (xanthosine triphosphate), dITP (deoxyinosine triphosphate) and ITP. Seems to function as a house-cleaning enzyme that removes non-canonical purine nucleotides from the nucleotide pool, thus preventing their incorporation into DNA/RNA and avoiding chromosomal lesions. This Helicobacter hepaticus (strain ATCC 51449 / 3B1) protein is dITP/XTP pyrophosphatase.